The sequence spans 289 residues: ATP synthase gamma chain (289 aa).

This sequence belongs to the ATPase gamma chain family. F-type ATPases have 2 components, CF(1) - the catalytic core - and CF(0) - the membrane proton channel. CF(1) has five subunits: alpha(3), beta(3), gamma(1), delta(1), epsilon(1). CF(0) has three main subunits: a, b and c.

It localises to the cell membrane. Produces ATP from ADP in the presence of a proton gradient across the membrane. The gamma chain is believed to be important in regulating ATPase activity and the flow of protons through the CF(0) complex. The sequence is that of ATP synthase gamma chain from Lactococcus lactis subsp. cremoris (strain MG1363).